An 832-amino-acid chain; its full sequence is Polyphosphoinositide phosphatase (832 aa).

The SAC domain maps to 145-491 (IEKVDLARTF…GDAIALQYGG (347 aa)).

Component of the PI(3,5)P2 regulatory complex. The cofactor is Mg(2+).

It is found in the cytoplasm. Its subcellular location is the vacuole membrane. The enzyme catalyses a 1,2-diacyl-sn-glycero-3-phospho-(1D-myo-inositol-3,5-bisphosphate) + H2O = a 1,2-diacyl-sn-glycero-3-phospho-(1D-myo-inositol-3-phosphate) + phosphate. The PI(3,5)P2 regulatory complex regulates both the synthesis and turnover of phosphatidylinositol 3,5-bisphosphate (PtdIns(3,5)P2). The polypeptide is Polyphosphoinositide phosphatase (Schizosaccharomyces pombe (strain 972 / ATCC 24843) (Fission yeast)).